The primary structure comprises 362 residues: tRNA-specific 2-thiouridylase MnmA (362 aa).

Residues Gly9 to Ser16 and Met35 each bind ATP. Residues Asn95 to Asp97 are interaction with target base in tRNA. Cys100 acts as the Nucleophile in catalysis. Cys100 and Cys196 are disulfide-bonded. Residue Gly124 coordinates ATP. Residues Lys146–Gln148 form an interaction with tRNA region. Cys196 acts as the Cysteine persulfide intermediate in catalysis. The interval Arg308–Tyr309 is interaction with tRNA.

Belongs to the MnmA/TRMU family.

It localises to the cytoplasm. It catalyses the reaction S-sulfanyl-L-cysteinyl-[protein] + uridine(34) in tRNA + AH2 + ATP = 2-thiouridine(34) in tRNA + L-cysteinyl-[protein] + A + AMP + diphosphate + H(+). Catalyzes the 2-thiolation of uridine at the wobble position (U34) of tRNA, leading to the formation of s(2)U34. This chain is tRNA-specific 2-thiouridylase MnmA, found in Nitrosomonas europaea (strain ATCC 19718 / CIP 103999 / KCTC 2705 / NBRC 14298).